The sequence spans 182 residues: tRNA-splicing endonuclease (182 aa).

Catalysis depends on residues Tyr119, His127, and Lys158.

This sequence belongs to the tRNA-intron endonuclease family. Archaeal short subfamily. As to quaternary structure, homotetramer; although the tetramer contains four active sites, only two participate in the cleavage. Therefore, it should be considered as a dimer of dimers.

The enzyme catalyses pretRNA = a 3'-half-tRNA molecule with a 5'-OH end + a 5'-half-tRNA molecule with a 2',3'-cyclic phosphate end + an intron with a 2',3'-cyclic phosphate and a 5'-hydroxyl terminus.. Endonuclease that removes tRNA introns. Cleaves pre-tRNA at the 5'- and 3'-splice sites to release the intron. The products are an intron and two tRNA half-molecules bearing 2',3' cyclic phosphate and 5'-OH termini. Recognizes a pseudosymmetric substrate in which 2 bulged loops of 3 bases are separated by a stem of 4 bp. The sequence is that of tRNA-splicing endonuclease from Saccharolobus solfataricus (strain ATCC 35092 / DSM 1617 / JCM 11322 / P2) (Sulfolobus solfataricus).